We begin with the raw amino-acid sequence, 883 residues long: uncharacterized protein (883 aa).

The interval 258 to 373 is disordered; it reads INNQSDNQSN…NQFNKPDNEP (116 aa). 3 stretches are compositionally biased toward low complexity: residues 259 to 268, 277 to 317, and 324 to 333; these read NNQSDNQSNS, EPNG…SNSE, and NEPNTEPNTE. Polar residues predominate over residues 334–347; that stretch reads SNGQSNSELNNQSD. Over residues 348–368 the composition is skewed to low complexity; the sequence is NHPNNEPNSEPNNEPNNQFNK.

It belongs to the mimivirus L137 family.

This is an uncharacterized protein from Acanthamoeba polyphaga mimivirus (APMV).